The sequence spans 274 residues: Tropomyosin (274 aa).

A compositionally biased stretch (basic and acidic residues) spans 1 to 35 (MKLEKDNAMDRADTLEQQNKEANNRAEKSEEEVHN). The segment at 1–45 (MKLEKDNAMDRADTLEQQNKEANNRAEKSEEEVHNLQKRMQQLEN) is disordered. Residues 1–274 (MKLEKDNAMD…DQTFSELSGY (274 aa)) adopt a coiled-coil conformation.

This sequence belongs to the tropomyosin family. Homodimer.

In terms of biological role, tropomyosin, in association with the troponin complex, plays a central role in the calcium dependent regulation of muscle contraction. This is Tropomyosin from Metapenaeus ensis (Greasyback shrimp).